A 22-amino-acid chain; its full sequence is Pectinesterase (22 aa).

Asp-6 acts as the Proton donor in catalysis. Substrate-binding residues include Arg-19 and Trp-21.

It belongs to the pectinesterase family.

It is found in the secreted. The protein localises to the cell wall. It carries out the reaction [(1-&gt;4)-alpha-D-galacturonosyl methyl ester](n) + n H2O = [(1-&gt;4)-alpha-D-galacturonosyl](n) + n methanol + n H(+). It participates in glycan metabolism; pectin degradation; 2-dehydro-3-deoxy-D-gluconate from pectin: step 1/5. This is Pectinesterase from Capsicum chinense (Scotch bonnet).